Consider the following 1508-residue polypeptide: Calponin homology domain-containing protein DDB_G0272472 (1508 aa).

Disordered stretches follow at residues 1–165, 197–290, 309–518, 531–561, 680–706, and 1036–1391; these read MFRN…KNDF, DSEE…NLSP, DFKS…TSIV, AANA…LFND, KEKQ…EKEL, and KIEK…KKSA. Positions 81-107 are enriched in low complexity; the sequence is SSSPSTSTTTTTKSSSTTTTTTTSSSS. Residues 208 to 222 show a composition bias toward basic and acidic residues; sequence PIKKKQSNDLEKNIF. Low complexity-rich tracts occupy residues 234–251, 263–290, and 315–332; these read KQST…QKQP, FGDS…NLSP, and SNNT…KSKP. 2 stretches are compositionally biased toward basic and acidic residues: residues 337-346 and 362-371; these read QKEEIKEVST and VDEKPKERST. The segment covering 380-391 has biased composition (polar residues); sequence KTVTVKSNNSFE. The span at 395–438 shows a compositional bias: low complexity; that stretch reads FGSTTTNDDGGDNDFSFTPATTPSSSSSTKATTTSPSSTTTTKS. A compositionally biased stretch (polar residues) spans 439-452; the sequence is NINIGQKSNKSVDQ. The stretch at 455–498 forms a coiled coil; that stretch reads QFLNDIFQQEEQDKKRREEEAKLKQQQKQKEKEQIKDEIDDLFK. A compositionally biased stretch (basic and acidic residues) spans 465–498; that stretch reads EQDKKRREEEAKLKQQQKQKEKEQIKDEIDDLFK. Low complexity-rich tracts occupy residues 500–516 and 531–557; these read SKPT…STTS and AANA…KSTN. The span at 1036 to 1164 shows a compositional bias: basic and acidic residues; it reads KIEKEKEERD…DQEEKEKQLK (129 aa). 2 stretches are compositionally biased toward low complexity: residues 1165 to 1181 and 1189 to 1206; these read EQQQ…TTTT and DSDA…SSHS. The segment covering 1216–1225 has biased composition (basic residues); sequence SKAKGRKKPT. Residues 1226-1235 are compositionally biased toward basic and acidic residues; the sequence is RRELTKDGNR. The span at 1333-1355 shows a compositional bias: low complexity; sequence PTVTQTTTTTTTPPTTPPSSSVQ. Residues 1362 to 1374 are compositionally biased toward polar residues; that stretch reads RSFSGSSFMGINS. Residues 1397–1504 enclose the Calponin-homology (CH) domain; the sequence is MKALDVLLQW…YLSEFFKVMK (108 aa).

The protein is Calponin homology domain-containing protein DDB_G0272472 of Dictyostelium discoideum (Social amoeba).